Here is a 105-residue protein sequence, read N- to C-terminus: DNA-directed RNA polymerase subunit omega (105 aa).

This sequence belongs to the RNA polymerase subunit omega family. As to quaternary structure, the RNAP catalytic core consists of 2 alpha, 1 beta, 1 beta' and 1 omega subunit. When a sigma factor is associated with the core the holoenzyme is formed, which can initiate transcription.

The enzyme catalyses RNA(n) + a ribonucleoside 5'-triphosphate = RNA(n+1) + diphosphate. Its function is as follows. Promotes RNA polymerase assembly. Latches the N- and C-terminal regions of the beta' subunit thereby facilitating its interaction with the beta and alpha subunits. The sequence is that of DNA-directed RNA polymerase subunit omega from Streptococcus mutans serotype c (strain ATCC 700610 / UA159).